A 280-amino-acid polypeptide reads, in one-letter code: Tryptophan synthase alpha chain (280 aa).

Active-site proton acceptor residues include glutamate 49 and aspartate 60.

The protein belongs to the TrpA family. As to quaternary structure, tetramer of two alpha and two beta chains.

The enzyme catalyses (1S,2R)-1-C-(indol-3-yl)glycerol 3-phosphate + L-serine = D-glyceraldehyde 3-phosphate + L-tryptophan + H2O. It participates in amino-acid biosynthesis; L-tryptophan biosynthesis; L-tryptophan from chorismate: step 5/5. The alpha subunit is responsible for the aldol cleavage of indoleglycerol phosphate to indole and glyceraldehyde 3-phosphate. The polypeptide is Tryptophan synthase alpha chain (Corynebacterium efficiens (strain DSM 44549 / YS-314 / AJ 12310 / JCM 11189 / NBRC 100395)).